Reading from the N-terminus, the 500-residue chain is Protein ASPARTIC PROTEASE IN GUARD CELL 1 (500 aa).

The signal sequence occupies residues 1 to 24 (MAFPRFLSLLAVVTLSLFLTTTDA). In terms of domain architecture, Peptidase A1 spans 162-496 (YFSRIGVGTP…DLSKNVIGLS (335 aa)). Asp180 is a catalytic residue. 6 cysteine pairs are disulfide-bonded: Cys190/Cys193, Cys196/Cys271, Cys217/Cys235, Cys222/Cys230, Cys307/Cys500, and Cys419/Cys461. The active site involves Asp379.

Belongs to the peptidase A1 family. Expressed in young seedlings, leaves, guard-cells, stems, flowers and siliques, but not in roots or mesophyll cells.

The protein localises to the endoplasmic reticulum. Its activity is regulated as follows. Inhibited by pepstatin A. Its function is as follows. Aspartic protease involved in drought avoidance through abscisic acid signaling. In Arabidopsis thaliana (Mouse-ear cress), this protein is Protein ASPARTIC PROTEASE IN GUARD CELL 1 (ASPG1).